The following is a 149-amino-acid chain: 3-dehydroquinate dehydratase (149 aa).

The active-site Proton acceptor is the Y26. 3 residues coordinate substrate: N77, H83, and D90. The Proton donor role is filled by H103. Substrate-binding positions include 104–105 (LS) and R114.

Belongs to the type-II 3-dehydroquinase family. Homododecamer.

It carries out the reaction 3-dehydroquinate = 3-dehydroshikimate + H2O. It functions in the pathway metabolic intermediate biosynthesis; chorismate biosynthesis; chorismate from D-erythrose 4-phosphate and phosphoenolpyruvate: step 3/7. Catalyzes a trans-dehydration via an enolate intermediate. The sequence is that of 3-dehydroquinate dehydratase from Edwardsiella ictaluri (strain 93-146).